A 547-amino-acid chain; its full sequence is Chaperonin GroEL 1 (547 aa).

Residues 30–33 (TLGP), Lys-51, 87–91 (DGTTT), Gly-415, and Asp-496 each bind ATP.

This sequence belongs to the chaperonin (HSP60) family. In terms of assembly, forms a cylinder of 14 subunits composed of two heptameric rings stacked back-to-back. Interacts with the co-chaperonin GroES.

The protein resides in the cytoplasm. It catalyses the reaction ATP + H2O + a folded polypeptide = ADP + phosphate + an unfolded polypeptide.. In terms of biological role, together with its co-chaperonin GroES, plays an essential role in assisting protein folding. The GroEL-GroES system forms a nano-cage that allows encapsulation of the non-native substrate proteins and provides a physical environment optimized to promote and accelerate protein folding. The sequence is that of Chaperonin GroEL 1 from Rhodopseudomonas palustris (strain BisB18).